The primary structure comprises 585 residues: Proline--tRNA ligase (585 aa).

The protein belongs to the class-II aminoacyl-tRNA synthetase family. ProS type 1 subfamily. In terms of assembly, homodimer.

It localises to the cytoplasm. The catalysed reaction is tRNA(Pro) + L-proline + ATP = L-prolyl-tRNA(Pro) + AMP + diphosphate. Its function is as follows. Catalyzes the attachment of proline to tRNA(Pro) in a two-step reaction: proline is first activated by ATP to form Pro-AMP and then transferred to the acceptor end of tRNA(Pro). As ProRS can inadvertently accommodate and process non-cognate amino acids such as alanine and cysteine, to avoid such errors it has two additional distinct editing activities against alanine. One activity is designated as 'pretransfer' editing and involves the tRNA(Pro)-independent hydrolysis of activated Ala-AMP. The other activity is designated 'posttransfer' editing and involves deacylation of mischarged Ala-tRNA(Pro). The misacylated Cys-tRNA(Pro) is not edited by ProRS. The chain is Proline--tRNA ligase from Corynebacterium diphtheriae (strain ATCC 700971 / NCTC 13129 / Biotype gravis).